The primary structure comprises 389 residues: Putative 8-amino-7-oxononanoate synthase (389 aa).

Residue arginine 22 participates in substrate binding. Pyridoxal 5'-phosphate is bound at residue 109–110 (GY). Histidine 134 lines the substrate pocket. Pyridoxal 5'-phosphate contacts are provided by residues serine 182, 207–210 (DDAH), and 238–241 (TLSK). Lysine 241 is modified (N6-(pyridoxal phosphate)lysine). Threonine 350 lines the substrate pocket.

The protein belongs to the class-II pyridoxal-phosphate-dependent aminotransferase family. BioF subfamily. In terms of assembly, homodimer. The cofactor is pyridoxal 5'-phosphate.

The enzyme catalyses 6-carboxyhexanoyl-[ACP] + L-alanine + H(+) = (8S)-8-amino-7-oxononanoate + holo-[ACP] + CO2. The protein operates within cofactor biosynthesis; biotin biosynthesis. Its function is as follows. Catalyzes the decarboxylative condensation of pimeloyl-[acyl-carrier protein] and L-alanine to produce 8-amino-7-oxononanoate (AON), [acyl-carrier protein], and carbon dioxide. In Parvibaculum lavamentivorans (strain DS-1 / DSM 13023 / NCIMB 13966), this protein is Putative 8-amino-7-oxononanoate synthase (bioF).